The following is a 716-amino-acid chain: Polyribonucleotide nucleotidyltransferase (716 aa).

Positions 493 and 499 each coordinate Mg(2+). The KH domain occupies 560–619 (PRMITIKINPEKIRDVIGKGGSVIRALTEETGTTIDISDDGVVTIASTSSEGMAEAKKRI). The S1 motif domain occupies 629 to 697 (GQVYEGTVLK…EKGRVRLSAK (69 aa)).

The protein belongs to the polyribonucleotide nucleotidyltransferase family. Requires Mg(2+) as cofactor.

The protein localises to the cytoplasm. The enzyme catalyses RNA(n+1) + phosphate = RNA(n) + a ribonucleoside 5'-diphosphate. In terms of biological role, involved in mRNA degradation. Catalyzes the phosphorolysis of single-stranded polyribonucleotides processively in the 3'- to 5'-direction. The sequence is that of Polyribonucleotide nucleotidyltransferase from Paraburkholderia xenovorans (strain LB400).